The following is a 316-amino-acid chain: Methionyl-tRNA formyltransferase (316 aa).

112–115 (SLLP) serves as a coordination point for (6S)-5,6,7,8-tetrahydrofolate.

The protein belongs to the Fmt family.

It catalyses the reaction L-methionyl-tRNA(fMet) + (6R)-10-formyltetrahydrofolate = N-formyl-L-methionyl-tRNA(fMet) + (6S)-5,6,7,8-tetrahydrofolate + H(+). Functionally, attaches a formyl group to the free amino group of methionyl-tRNA(fMet). The formyl group appears to play a dual role in the initiator identity of N-formylmethionyl-tRNA by promoting its recognition by IF2 and preventing the misappropriation of this tRNA by the elongation apparatus. This is Methionyl-tRNA formyltransferase from Actinobacillus pleuropneumoniae serotype 5b (strain L20).